We begin with the raw amino-acid sequence, 393 residues long: Lipid-A-disaccharide synthase (393 aa).

The protein belongs to the LpxB family.

It carries out the reaction a lipid X + a UDP-2-N,3-O-bis[(3R)-3-hydroxyacyl]-alpha-D-glucosamine = a lipid A disaccharide + UDP + H(+). It participates in bacterial outer membrane biogenesis; LPS lipid A biosynthesis. Its function is as follows. Condensation of UDP-2,3-diacylglucosamine and 2,3-diacylglucosamine-1-phosphate to form lipid A disaccharide, a precursor of lipid A, a phosphorylated glycolipid that anchors the lipopolysaccharide to the outer membrane of the cell. In Bordetella petrii (strain ATCC BAA-461 / DSM 12804 / CCUG 43448), this protein is Lipid-A-disaccharide synthase.